The chain runs to 296 residues: Formamidopyrimidine-DNA glycosylase (296 aa).

Residue P2 is the Schiff-base intermediate with DNA of the active site. Residue E3 is the Proton donor of the active site. Residue K58 is the Proton donor; for beta-elimination activity of the active site. DNA-binding residues include H104, R126, and K169. An FPG-type zinc finger spans residues 260–296 (SVYDRAGEACRKPGCDGTVTRIVQAGRSTFHCPRCQK). The Proton donor; for delta-elimination activity role is filled by R286.

This sequence belongs to the FPG family. In terms of assembly, monomer. Requires Zn(2+) as cofactor.

The enzyme catalyses Hydrolysis of DNA containing ring-opened 7-methylguanine residues, releasing 2,6-diamino-4-hydroxy-5-(N-methyl)formamidopyrimidine.. It catalyses the reaction 2'-deoxyribonucleotide-(2'-deoxyribose 5'-phosphate)-2'-deoxyribonucleotide-DNA = a 3'-end 2'-deoxyribonucleotide-(2,3-dehydro-2,3-deoxyribose 5'-phosphate)-DNA + a 5'-end 5'-phospho-2'-deoxyribonucleoside-DNA + H(+). Involved in base excision repair of DNA damaged by oxidation or by mutagenic agents. Acts as a DNA glycosylase that recognizes and removes damaged bases. Has a preference for oxidized purines, such as 7,8-dihydro-8-oxoguanine (8-oxoG). Has AP (apurinic/apyrimidinic) lyase activity and introduces nicks in the DNA strand. Cleaves the DNA backbone by beta-delta elimination to generate a single-strand break at the site of the removed base with both 3'- and 5'-phosphates. The protein is Formamidopyrimidine-DNA glycosylase of Sinorhizobium fredii (strain NBRC 101917 / NGR234).